A 126-amino-acid polypeptide reads, in one-letter code: Protein ApaG (126 aa).

The 125-residue stretch at 2-126 folds into the ApaG domain; sequence SQVESPIKIK…FRLAVPGIFQ (125 aa).

The polypeptide is Protein ApaG (Shewanella frigidimarina (strain NCIMB 400)).